Consider the following 148-residue polypeptide: Single-stranded DNA-binding protein 2 (148 aa).

The 103-residue stretch at 6–108 (MNHITVSGLV…IEAESFGHDL (103 aa)) folds into the SSB domain.

As to quaternary structure, homotetramer.

The chain is Single-stranded DNA-binding protein 2 (ssb2) from Tropheryma whipplei (strain TW08/27) (Whipple's bacillus).